The following is a 242-amino-acid chain: Pyridoxine 5'-phosphate synthase (242 aa).

Residue N6 coordinates 3-amino-2-oxopropyl phosphate. A 1-deoxy-D-xylulose 5-phosphate-binding site is contributed by 8–9 (DH). R17 lines the 3-amino-2-oxopropyl phosphate pocket. Catalysis depends on H42, which acts as the Proton acceptor. Positions 44 and 49 each coordinate 1-deoxy-D-xylulose 5-phosphate. The Proton acceptor role is filled by E69. Residue T99 participates in 1-deoxy-D-xylulose 5-phosphate binding. Residue H190 is the Proton donor of the active site. 3-amino-2-oxopropyl phosphate-binding positions include G191 and 212-213 (GH).

This sequence belongs to the PNP synthase family. Homooctamer; tetramer of dimers.

It is found in the cytoplasm. The catalysed reaction is 3-amino-2-oxopropyl phosphate + 1-deoxy-D-xylulose 5-phosphate = pyridoxine 5'-phosphate + phosphate + 2 H2O + H(+). The protein operates within cofactor biosynthesis; pyridoxine 5'-phosphate biosynthesis; pyridoxine 5'-phosphate from D-erythrose 4-phosphate: step 5/5. Catalyzes the complicated ring closure reaction between the two acyclic compounds 1-deoxy-D-xylulose-5-phosphate (DXP) and 3-amino-2-oxopropyl phosphate (1-amino-acetone-3-phosphate or AAP) to form pyridoxine 5'-phosphate (PNP) and inorganic phosphate. This chain is Pyridoxine 5'-phosphate synthase, found in Neisseria meningitidis serogroup B (strain ATCC BAA-335 / MC58).